Here is a 148-residue protein sequence, read N- to C-terminus: Ubiquitin-conjugating enzyme E2-17 kDa (148 aa).

Positions 1–147 constitute a UBC core domain; the sequence is MASKRILKEL…ARSWTQKYAM (147 aa). The Glycyl thioester intermediate role is filled by Cys85.

This sequence belongs to the ubiquitin-conjugating enzyme family.

It catalyses the reaction S-ubiquitinyl-[E1 ubiquitin-activating enzyme]-L-cysteine + [E2 ubiquitin-conjugating enzyme]-L-cysteine = [E1 ubiquitin-activating enzyme]-L-cysteine + S-ubiquitinyl-[E2 ubiquitin-conjugating enzyme]-L-cysteine.. The protein operates within protein modification; protein ubiquitination. Catalyzes the covalent attachment of ubiquitin to other proteins. Mediates the selective degradation of short-lived and abnormal proteins. This chain is Ubiquitin-conjugating enzyme E2-17 kDa, found in Solanum lycopersicum (Tomato).